Here is a 237-residue protein sequence, read N- to C-terminus: Deoxyribose-phosphate aldolase (237 aa).

Residue Asp94 is the Proton donor/acceptor of the active site. The Schiff-base intermediate with acetaldehyde role is filled by Lys158. Lys187 (proton donor/acceptor) is an active-site residue.

The protein belongs to the DeoC/FbaB aldolase family. DeoC type 1 subfamily.

The protein resides in the cytoplasm. The catalysed reaction is 2-deoxy-D-ribose 5-phosphate = D-glyceraldehyde 3-phosphate + acetaldehyde. It participates in carbohydrate degradation; 2-deoxy-D-ribose 1-phosphate degradation; D-glyceraldehyde 3-phosphate and acetaldehyde from 2-deoxy-alpha-D-ribose 1-phosphate: step 2/2. In terms of biological role, catalyzes a reversible aldol reaction between acetaldehyde and D-glyceraldehyde 3-phosphate to generate 2-deoxy-D-ribose 5-phosphate. The chain is Deoxyribose-phosphate aldolase from Lactobacillus acidophilus (strain ATCC 700396 / NCK56 / N2 / NCFM).